Reading from the N-terminus, the 455-residue chain is Phosphoglucosamine mutase (455 aa).

The active-site Phosphoserine intermediate is the serine 108. Mg(2+)-binding residues include serine 108, aspartate 246, aspartate 248, and aspartate 250. At serine 108 the chain carries Phosphoserine.

The protein belongs to the phosphohexose mutase family. The cofactor is Mg(2+). Activated by phosphorylation.

It catalyses the reaction alpha-D-glucosamine 1-phosphate = D-glucosamine 6-phosphate. Functionally, catalyzes the conversion of glucosamine-6-phosphate to glucosamine-1-phosphate. This chain is Phosphoglucosamine mutase, found in Frankia alni (strain DSM 45986 / CECT 9034 / ACN14a).